The sequence spans 579 residues: Phosphatidylinositol/phosphatidylcholine transfer protein SFH9 (579 aa).

In terms of domain architecture, CRAL-TRIO spans 145-319; it reads EYEEVQQYYP…FLGGNCKCAH (175 aa). Residues 372-419 form a disordered region; that stretch reads DMSSPDGGHVRERESHPEHDKRAQLSNQAEAVGVGRMEQSDSTSPLPN. The span at 379 to 394 shows a compositional bias: basic and acidic residues; it reads GHVRERESHPEHDKRA. The stretch at 512–539 forms a coiled coil; sequence QEKEDILRDSLDRIKSIEQDLQKTKKAL.

Belongs to the SFH family.

It is found in the golgi apparatus membrane. The protein localises to the cell membrane. Required for transport of secretory proteins from the Golgi complex. Catalyzes the transfer of phosphatidylinositol and phosphatidylcholine between membranes in vitro. The chain is Phosphatidylinositol/phosphatidylcholine transfer protein SFH9 (SFH9) from Arabidopsis thaliana (Mouse-ear cress).